Consider the following 88-residue polypeptide: MVKIRLKRVGKKFNVIYKIVVADSRAPRDGRFIEEVGNYNPHSKSLNLKKEAIISWLNQGVKPSDTVKRLLTREKVWEEFTSLKNNKN.

It belongs to the bacterial ribosomal protein bS16 family.

This chain is Small ribosomal subunit protein bS16, found in Mycoplasmopsis pulmonis (strain UAB CTIP) (Mycoplasma pulmonis).